We begin with the raw amino-acid sequence, 91 residues long: DNA-binding protein HU (91 aa).

It belongs to the bacterial histone-like protein family.

In terms of biological role, histone-like DNA-binding protein which is capable of wrapping DNA to stabilize it, and thus to prevent its denaturation under extreme environmental conditions. In Clostridium pasteurianum, this protein is DNA-binding protein HU (hup).